A 118-amino-acid polypeptide reads, in one-letter code: Beta-2-microglobulin (118 aa).

A signal peptide spans 1-21 (MGSRWGIAVLGLFCFVSCLEA). The region spanning 26–113 (PKIQVYSRHP…VHEGVKKTVK (88 aa)) is the Ig-like C1-type domain. Cysteines 46 and 101 form a disulfide.

The protein belongs to the beta-2-microglobulin family. Heterodimer of an alpha chain and a beta chain. Beta-2-microglobulin is the beta-chain of major histocompatibility complex class I molecules.

It is found in the secreted. Functionally, component of the class I major histocompatibility complex (MHC). Involved in the presentation of peptide antigens to the immune system. The chain is Beta-2-microglobulin (B2M) from Ornithorhynchus anatinus (Duckbill platypus).